Reading from the N-terminus, the 178-residue chain is Crossover junction endodeoxyribonuclease RuvC (178 aa).

Catalysis depends on residues D11, E71, and D143. Mg(2+) contacts are provided by D11, E71, and D143.

The protein belongs to the RuvC family. Homodimer which binds Holliday junction (HJ) DNA. The HJ becomes 2-fold symmetrical on binding to RuvC with unstacked arms; it has a different conformation from HJ DNA in complex with RuvA. In the full resolvosome a probable DNA-RuvA(4)-RuvB(12)-RuvC(2) complex forms which resolves the HJ. Mg(2+) is required as a cofactor.

Its subcellular location is the cytoplasm. It carries out the reaction Endonucleolytic cleavage at a junction such as a reciprocal single-stranded crossover between two homologous DNA duplexes (Holliday junction).. Functionally, the RuvA-RuvB-RuvC complex processes Holliday junction (HJ) DNA during genetic recombination and DNA repair. Endonuclease that resolves HJ intermediates. Cleaves cruciform DNA by making single-stranded nicks across the HJ at symmetrical positions within the homologous arms, yielding a 5'-phosphate and a 3'-hydroxyl group; requires a central core of homology in the junction. The consensus cleavage sequence is 5'-(A/T)TT(C/G)-3'. Cleavage occurs on the 3'-side of the TT dinucleotide at the point of strand exchange. HJ branch migration catalyzed by RuvA-RuvB allows RuvC to scan DNA until it finds its consensus sequence, where it cleaves and resolves the cruciform DNA. This is Crossover junction endodeoxyribonuclease RuvC from Neisseria meningitidis serogroup A / serotype 4A (strain DSM 15465 / Z2491).